A 396-amino-acid polypeptide reads, in one-letter code: Putative cyclin-B3-1 (396 aa).

Positions 1–98 are disordered; the sequence is MLRDGNKQSK…KVLDVTAKPK (98 aa). A compositionally biased stretch (polar residues) spans 21–32; that stretch reads KTTVKTSLQNRS. The span at 39–57 shows a compositional bias: low complexity; sequence VGRSKSRSISSIPSSAVAS. Positions 76–85 are enriched in polar residues; sequence GESSSSGNKD.

It belongs to the cyclin family. Cyclin AB subfamily.

This is Putative cyclin-B3-1 (CYCB3-1) from Arabidopsis thaliana (Mouse-ear cress).